The chain runs to 313 residues: Protoheme IX farnesyltransferase (313 aa).

9 helical membrane passes run 35 to 55 (LVIFTALVGLLLAPGYIHPVL), 56 to 76 (AFTSILCIAVGAGASGALNMW), 98 to 118 (VSKPEALTFGLVLSFFSVVTL), 120 to 140 (ILVNWFAAALLAFTIFFYVVI), 153 to 173 (IVIGGAAGALPPVVAWAAAAG), 180 to 200 (MLLFAIIFFWTPPHFWALALF), 226 to 246 (ILLYTIVLVAVAFAPWPLGYF), 248 to 268 (AIYGITSLALGGWMLLLTLRV), and 285 to 305 (FKFSILYLFALFAVLLLEVIV).

Belongs to the UbiA prenyltransferase family. Protoheme IX farnesyltransferase subfamily.

Its subcellular location is the cell inner membrane. It catalyses the reaction heme b + (2E,6E)-farnesyl diphosphate + H2O = Fe(II)-heme o + diphosphate. Its pathway is porphyrin-containing compound metabolism; heme O biosynthesis; heme O from protoheme: step 1/1. Its function is as follows. Converts heme B (protoheme IX) to heme O by substitution of the vinyl group on carbon 2 of heme B porphyrin ring with a hydroxyethyl farnesyl side group. The protein is Protoheme IX farnesyltransferase of Rhodopseudomonas palustris (strain BisB18).